A 400-amino-acid chain; its full sequence is Leucine-rich repeat flightless-interacting protein 2 (400 aa).

2 disordered regions span residues 1–28 (MGTP…SNID) and 53–119 (LERQ…LSEV). Serine 18 is subject to Phosphoserine. A coiled-coil region spans residues 29–71 (REAEARLAAKRAARAEARDIRMRELERQQKELDEKSDKQYAEN). Basic and acidic residues predominate over residues 53–68 (LERQQKELDEKSDKQY). The span at 73–102 (TRPSSRNSASATTPLSGNSSRRVSGDTSSL) shows a compositional bias: polar residues. Phosphoserine occurs at positions 77, 80, 88, 92, and 96. Phosphothreonine is present on threonine 99. Serine 100 and serine 101 each carry phosphoserine. Coiled-coil stretches lie at residues 106 to 202 (DTSL…LIEK) and 245 to 393 (LDVR…KANR).

The protein belongs to the LRRFIP family. In terms of assembly, interacts with DVL3 and FLII. Weakly interacts with MYD88 in resting cells. Following LPS-stimulation, the interaction with MYD88 is rapidly enhanced; the complex gradually dissociates to basal levels after 6 hours of stimulation. Interaction with MYD88 is regulated by LPS-induced phosphorylation. In the presence of LPS, competes with FLII for MYD88-binding.

May function as activator of the canonical Wnt signaling pathway, in association with DVL3, upstream of CTNNB1/beta-catenin. Positively regulates Toll-like receptor (TLR) signaling in response to agonist probably by competing with the negative FLII regulator for MYD88-binding. This Bos taurus (Bovine) protein is Leucine-rich repeat flightless-interacting protein 2 (LRRFIP2).